Here is a 391-residue protein sequence, read N- to C-terminus: 8-amino-7-oxononanoate synthase (391 aa).

R19 contributes to the substrate binding site. 106 to 107 (GY) is a pyridoxal 5'-phosphate binding site. H131 contributes to the substrate binding site. Positions 178, 206, and 234 each coordinate pyridoxal 5'-phosphate. Residue K237 is modified to N6-(pyridoxal phosphate)lysine. Residue T353 participates in substrate binding.

The protein belongs to the class-II pyridoxal-phosphate-dependent aminotransferase family. BioF subfamily. Homodimer. Pyridoxal 5'-phosphate is required as a cofactor.

It catalyses the reaction 6-carboxyhexanoyl-[ACP] + L-alanine + H(+) = (8S)-8-amino-7-oxononanoate + holo-[ACP] + CO2. Its pathway is cofactor biosynthesis; biotin biosynthesis. In terms of biological role, catalyzes the decarboxylative condensation of pimeloyl-[acyl-carrier protein] and L-alanine to produce 8-amino-7-oxononanoate (AON), [acyl-carrier protein], and carbon dioxide. This Geobacter sulfurreducens (strain ATCC 51573 / DSM 12127 / PCA) protein is 8-amino-7-oxononanoate synthase.